A 324-amino-acid chain; its full sequence is IDS-like terpene synthase 2 (324 aa).

Mg(2+) contacts are provided by Asp-77 and Asp-81.

It belongs to the FPP/GGPP synthase family. Requires Mg(2+) as cofactor.

The catalysed reaction is (2E)-geranyl diphosphate = (E)-beta-ocimene + diphosphate. The enzyme catalyses (2E,6E)-farnesyl diphosphate = (3E,6E)-alpha-farnesene + diphosphate. It carries out the reaction (2E,6E,10E)-geranylgeranyl diphosphate = (E,E,E)-alpha-springene + diphosphate. In terms of biological role, terpene synthase that shows monoterpene synthase activity and produces (E)-beta-ocimene as a major product, using geranyl diphosphate (GPP) as substrate. Also shows sesquiterpene synthase activity as it is able to convert farnesyl diphosphate (FPP) into (E,E)-alpha-farnesene. Finally, TPS2 can convert geranylgeranyl diphosphate into (E,E,E)-alpha-springene. This is IDS-like terpene synthase 2 from Melampsora lini (Rust fungus).